The chain runs to 276 residues: 2-dehydro-3-deoxyphosphooctonate aldolase (276 aa).

This sequence belongs to the KdsA family.

The protein resides in the cytoplasm. It catalyses the reaction D-arabinose 5-phosphate + phosphoenolpyruvate + H2O = 3-deoxy-alpha-D-manno-2-octulosonate-8-phosphate + phosphate. It participates in carbohydrate biosynthesis; 3-deoxy-D-manno-octulosonate biosynthesis; 3-deoxy-D-manno-octulosonate from D-ribulose 5-phosphate: step 2/3. The protein operates within bacterial outer membrane biogenesis; lipopolysaccharide biosynthesis. This chain is 2-dehydro-3-deoxyphosphooctonate aldolase, found in Xanthomonas euvesicatoria pv. vesicatoria (strain 85-10) (Xanthomonas campestris pv. vesicatoria).